Reading from the N-terminus, the 226-residue chain is Cytidylate kinase (226 aa).

12-20 is an ATP binding site; sequence GPSGAGKGT.

This sequence belongs to the cytidylate kinase family. Type 1 subfamily.

It localises to the cytoplasm. It carries out the reaction CMP + ATP = CDP + ADP. The enzyme catalyses dCMP + ATP = dCDP + ADP. This Vibrio vulnificus (strain YJ016) protein is Cytidylate kinase.